The chain runs to 847 residues: KN motif and ankyrin repeat domain-containing protein 2 (847 aa).

A disordered region spans residues Met-1–Tyr-32. An interaction with AIFM1 region spans residues Met-1 to Ser-72. Residues Ser-19, Ser-83, Ser-86, Ser-89, and Ser-92 each carry the phosphoserine modification. Omega-N-methylarginine is present on Arg-105. Positions Leu-161–Pro-182 are disordered. Thr-170 carries the post-translational modification Phosphothreonine. 2 coiled-coil regions span residues Leu-187 to Gln-207 and Glu-284 to Gln-311. Position 331 is a phosphothreonine (Thr-331). Ser-358 carries the post-translational modification Phosphoserine. 2 disordered regions span residues Gly-414 to Ser-473 and Asn-502 to Glu-581. Residues Asp-420–Pro-433 show a composition bias toward pro residues. 2 stretches are compositionally biased toward low complexity: residues Tyr-434–Ala-446 and Glu-506–Glu-516. Phosphoserine is present on Ser-536. An ANK 0; degenerate repeat occupies Arg-610 to Met-647. ANK repeat units follow at residues Asn-662 to Lys-692, Ala-696 to Ala-729, Ala-734 to Met-763, Asp-767 to Leu-797, and Asp-801 to Phe-831. Residues Thr-665–Phe-831 are interaction with NCOA1.

In terms of assembly, interacts (non-phosphorylated form) with NCOA1; NCOA2 AND NCOA3. Interacts with AIFM1. Interacts with ARHGDIA; the interaction is direct and may regulate the interaction of ARHGDIA with RHOA, RAC1 and CDC42. Interacts (via ANK repeats 1-5) with KIF21A. Post-translationally, phosphorylated by casein kinase II upon estrogen stimulation. Phosphorylation induces the release by KANK2 of NCOA1 and its translocation to the nucleus where NCOA1 can activate gene transcription. In terms of tissue distribution, expressed by podocytes in kidney glomeruli (at protein level).

The protein localises to the cytoplasm. It localises to the mitochondrion. Its function is as follows. Involved in transcription regulation by sequestering in the cytoplasm nuclear receptor coactivators such as NCOA1, NCOA2 and NCOA3. Involved in regulation of caspase-independent apoptosis by sequestering the proapoptotic factor AIFM1 in mitochondria. Pro-apoptotic stimuli can induce its proteasomal degradation allowing the translocation of AIFM1 to the nucleus to induce apoptosis. Involved in the negative control of vitamin D receptor signaling pathway. Involved in actin stress fibers formation through its interaction with ARHGDIA and the regulation of the Rho signaling pathway. May thereby play a role in cell adhesion and migration, regulating for instance podocytes migration during development of the kidney. Through the Rho signaling pathway may also regulate cell proliferation. This chain is KN motif and ankyrin repeat domain-containing protein 2, found in Rattus norvegicus (Rat).